The sequence spans 477 residues: Glycogen synthase (477 aa).

ADP-alpha-D-glucose is bound at residue Lys15.

This sequence belongs to the glycosyltransferase 1 family. Bacterial/plant glycogen synthase subfamily.

The enzyme catalyses [(1-&gt;4)-alpha-D-glucosyl](n) + ADP-alpha-D-glucose = [(1-&gt;4)-alpha-D-glucosyl](n+1) + ADP + H(+). It participates in glycan biosynthesis; glycogen biosynthesis. Functionally, synthesizes alpha-1,4-glucan chains using ADP-glucose. This is Glycogen synthase from Myxococcus xanthus (strain DK1622).